The sequence spans 85 residues: Large ribosomal subunit protein bL27 (85 aa).

The tract at residues 1-21 (MAHKKAGGSTRNGRDSESKRL) is disordered.

Belongs to the bacterial ribosomal protein bL27 family.

The polypeptide is Large ribosomal subunit protein bL27 (Pseudomonas entomophila (strain L48)).